The sequence spans 193 residues: Cytidylate kinase (193 aa).

Position 12-20 (12-20 (GLAGSGTTT)) interacts with ATP.

The protein belongs to the cytidylate kinase family. Type 2 subfamily.

The protein resides in the cytoplasm. It catalyses the reaction CMP + ATP = CDP + ADP. The enzyme catalyses dCMP + ATP = dCDP + ADP. The protein is Cytidylate kinase of Thermococcus kodakarensis (strain ATCC BAA-918 / JCM 12380 / KOD1) (Pyrococcus kodakaraensis (strain KOD1)).